Reading from the N-terminus, the 465-residue chain is Ribosomal protein uS12 methylthiotransferase RimO (465 aa).

In terms of domain architecture, MTTase N-terminal spans 1-117 (MKVGFISLGC…IVDICEGMPP (117 aa)). 6 residues coordinate [4Fe-4S] cluster: Cys-10, Cys-46, Cys-80, Cys-150, Cys-154, and Cys-157. A Radical SAM core domain is found at 136–369 (ATPRHFAYMK…AIQRKIARAR (234 aa)). The TRAM domain occupies 371–442 (RGLVGKEVPV…DYDVVGTLLA (72 aa)).

The protein belongs to the methylthiotransferase family. RimO subfamily. [4Fe-4S] cluster is required as a cofactor.

It is found in the cytoplasm. The catalysed reaction is L-aspartate(89)-[ribosomal protein uS12]-hydrogen + (sulfur carrier)-SH + AH2 + 2 S-adenosyl-L-methionine = 3-methylsulfanyl-L-aspartate(89)-[ribosomal protein uS12]-hydrogen + (sulfur carrier)-H + 5'-deoxyadenosine + L-methionine + A + S-adenosyl-L-homocysteine + 2 H(+). Functionally, catalyzes the methylthiolation of an aspartic acid residue of ribosomal protein uS12. The sequence is that of Ribosomal protein uS12 methylthiotransferase RimO from Solibacter usitatus (strain Ellin6076).